The sequence spans 311 residues: Glutaminase (311 aa).

Substrate is bound by residues Ser66, Asn116, Glu162, Asn169, Tyr193, Tyr245, and Val263.

It belongs to the glutaminase family. In terms of assembly, homotetramer.

The enzyme catalyses L-glutamine + H2O = L-glutamate + NH4(+). The protein is Glutaminase of Rhodopseudomonas palustris (strain TIE-1).